A 69-amino-acid chain; its full sequence is Putative membrane protein insertion efficiency factor (69 aa).

This sequence belongs to the UPF0161 family.

It localises to the cell inner membrane. Its function is as follows. Could be involved in insertion of integral membrane proteins into the membrane. The sequence is that of Putative membrane protein insertion efficiency factor from Chromobacterium violaceum (strain ATCC 12472 / DSM 30191 / JCM 1249 / CCUG 213 / NBRC 12614 / NCIMB 9131 / NCTC 9757 / MK).